We begin with the raw amino-acid sequence, 456 residues long: tRNA modification GTPase MnmE (456 aa).

Residues R24, E81, and K120 each coordinate (6S)-5-formyl-5,6,7,8-tetrahydrofolate. The TrmE-type G domain maps to 216–379 (GMTVVIAGRP…LREHLKACMG (164 aa)). N226 contacts K(+). GTP-binding positions include 226–231 (NAGKSS), 245–251 (TEIAGTT), 270–273 (DTAG), 335–338 (NKAD), and 359–361 (SAR). A Mg(2+)-binding site is contributed by S230. T245, I247, and T250 together coordinate K(+). A Mg(2+)-binding site is contributed by T251. A (6S)-5-formyl-5,6,7,8-tetrahydrofolate-binding site is contributed by K456.

It belongs to the TRAFAC class TrmE-Era-EngA-EngB-Septin-like GTPase superfamily. TrmE GTPase family. Homodimer. Heterotetramer of two MnmE and two MnmG subunits. Requires K(+) as cofactor.

It localises to the cytoplasm. In terms of biological role, exhibits a very high intrinsic GTPase hydrolysis rate. Involved in the addition of a carboxymethylaminomethyl (cmnm) group at the wobble position (U34) of certain tRNAs, forming tRNA-cmnm(5)s(2)U34. The protein is tRNA modification GTPase MnmE of Pseudomonas syringae pv. tomato (strain ATCC BAA-871 / DC3000).